The primary structure comprises 385 residues: Histidinol-phosphate aminotransferase (385 aa).

An N6-(pyridoxal phosphate)lysine modification is found at Lys235.

The protein belongs to the class-II pyridoxal-phosphate-dependent aminotransferase family. Histidinol-phosphate aminotransferase subfamily. In terms of assembly, homodimer. Requires pyridoxal 5'-phosphate as cofactor.

It catalyses the reaction L-histidinol phosphate + 2-oxoglutarate = 3-(imidazol-4-yl)-2-oxopropyl phosphate + L-glutamate. Its pathway is amino-acid biosynthesis; L-histidine biosynthesis; L-histidine from 5-phospho-alpha-D-ribose 1-diphosphate: step 7/9. The chain is Histidinol-phosphate aminotransferase from Nocardia farcinica (strain IFM 10152).